A 266-amino-acid polypeptide reads, in one-letter code: Hemin import ATP-binding protein HmuV (266 aa).

An ABC transporter domain is found at leucine 12–aspartate 248. Residue glycine 44 to serine 51 participates in ATP binding.

Belongs to the ABC transporter superfamily. Heme (hemin) importer (TC 3.A.1.14.5) family. The complex is composed of two ATP-binding proteins (HmuV), two transmembrane proteins (HmuU) and a solute-binding protein (HmuT).

Its subcellular location is the cell inner membrane. In terms of biological role, part of the ABC transporter complex HmuTUV involved in hemin import. Responsible for energy coupling to the transport system. The chain is Hemin import ATP-binding protein HmuV from Yersinia enterocolitica.